We begin with the raw amino-acid sequence, 181 residues long: Large ribosomal subunit protein uL5 (181 aa).

This sequence belongs to the universal ribosomal protein uL5 family. In terms of assembly, part of the 50S ribosomal subunit; contacts the 5S rRNA and probably tRNA. Forms a bridge to the 30S subunit in the 70S ribosome.

Its function is as follows. This is one of the proteins that bind and probably mediate the attachment of the 5S RNA into the large ribosomal subunit, where it forms part of the central protuberance. In the 70S ribosome it contacts protein S13 of the 30S subunit (bridge B1b), connecting the 2 subunits; this bridge is implicated in subunit movement. May contact the P site tRNA; the 5S rRNA and some of its associated proteins might help stabilize positioning of ribosome-bound tRNAs. The chain is Large ribosomal subunit protein uL5 from Methanococcus maripaludis (strain C5 / ATCC BAA-1333).